A 218-amino-acid polypeptide reads, in one-letter code: Glutathione S-transferase Mu 1 (218 aa).

In terms of domain architecture, GST N-terminal spans Pro-2–Gly-88. Tyr-7–Trp-8 provides a ligand contact to glutathione. Position 34 is a phosphothreonine (Thr-34). Glutathione-binding positions include Arg-43 to Trp-46, Lys-50, Asn-59 to Leu-60, and Gln-72 to Ser-73. Residues Thr-90 to Leu-208 enclose the GST C-terminal domain. Residue Tyr-116 coordinates substrate.

Belongs to the GST superfamily. Mu family. In terms of assembly, homodimer.

It is found in the cytoplasm. It catalyses the reaction RX + glutathione = an S-substituted glutathione + a halide anion + H(+). The catalysed reaction is prostaglandin A2 + glutathione = prostaglandin A2-S-(R)-glutathione. The enzyme catalyses prostaglandin J2 + glutathione = prostaglandin J2-S-(R)-glutathione. It carries out the reaction prostaglandin J2 + glutathione = prostaglandin J2-S-(S)-glutathione. It catalyses the reaction prostaglandin A2 + glutathione = prostaglandin A2-S-(S)-glutathione. The catalysed reaction is 11(S)-hydroxy-14(S),15(S)-epoxy-(5Z,8Z,12E)-eicosatrienoate + glutathione = (11S,15S)-dihydroxy-14(R)-S-glutathionyl-(5Z,8Z,12E)-eicosatrienoate. In terms of biological role, conjugation of reduced glutathione to a wide number of exogenous and endogenous hydrophobic electrophiles. Involved in the formation of glutathione conjugates of both prostaglandin A2 (PGA2) and prostaglandin J2 (PGJ2). Participates in the formation of novel hepoxilin regioisomers. The sequence is that of Glutathione S-transferase Mu 1 (GSTM1) from Macaca fascicularis (Crab-eating macaque).